Reading from the N-terminus, the 197-residue chain is Ribonuclease HII (197 aa).

Residues 4–197 (IWVCGVDEAG…VRKALESVAS (194 aa)) form the RNase H type-2 domain. A divalent metal cation is bound by residues aspartate 10, glutamate 11, and aspartate 106.

Belongs to the RNase HII family. Mn(2+) is required as a cofactor. Requires Mg(2+) as cofactor.

It is found in the cytoplasm. The enzyme catalyses Endonucleolytic cleavage to 5'-phosphomonoester.. Its function is as follows. Endonuclease that specifically degrades the RNA of RNA-DNA hybrids. The protein is Ribonuclease HII of Polynucleobacter necessarius subsp. necessarius (strain STIR1).